The following is a 673-amino-acid chain: UPF0313 protein blr7973 (673 aa).

Residues 332-611 (AWDMIKFSVT…KAFLRYHDPD (280 aa)) enclose the Radical SAM core domain. The [4Fe-4S] cluster site is built by Cys346, Cys350, and Cys353. The disordered stretch occupies residues 632-673 (RPDQLVPAHQPPGTGKAAGTRRPVRPGGKTQRFTTKGLRVMK).

It belongs to the UPF0313 family. [4Fe-4S] cluster serves as cofactor.

This chain is UPF0313 protein blr7973, found in Bradyrhizobium diazoefficiens (strain JCM 10833 / BCRC 13528 / IAM 13628 / NBRC 14792 / USDA 110).